A 366-amino-acid polypeptide reads, in one-letter code: 2-aminoethylphosphonate--pyruvate transaminase (366 aa).

An N6-(pyridoxal phosphate)lysine modification is found at K192.

Belongs to the class-V pyridoxal-phosphate-dependent aminotransferase family. PhnW subfamily. Homodimer. Pyridoxal 5'-phosphate serves as cofactor.

The enzyme catalyses (2-aminoethyl)phosphonate + pyruvate = phosphonoacetaldehyde + L-alanine. Its function is as follows. Involved in phosphonate degradation. The chain is 2-aminoethylphosphonate--pyruvate transaminase (phnW) from Lysinibacillus sphaericus (strain C3-41).